Here is a 299-residue protein sequence, read N- to C-terminus: Regucalcin (299 aa).

Glu18 is an a divalent metal cation binding site. Substrate is bound by residues Arg101, Asn103, and Glu121. Lys144 carries the post-translational modification N6-succinyllysine. The a divalent metal cation site is built by Asn154 and Asp204. Asp204 functions as the Proton donor/acceptor in the catalytic mechanism. Residues Lys244 and Lys253 each carry the N6-succinyllysine modification.

This sequence belongs to the SMP-30/CGR1 family. In terms of assembly, monomer. Zn(2+) is required as a cofactor. The cofactor is Mn(2+). Ca(2+) serves as cofactor. It depends on Mg(2+) as a cofactor.

The protein resides in the cytoplasm. The catalysed reaction is D-glucono-1,5-lactone + H2O = D-gluconate + H(+). Functionally, gluconolactonase with low activity towards other sugar lactones, including gulonolactone and galactonolactone. Can also hydrolyze diisopropyl phosphorofluoridate and phenylacetate (in vitro). Calcium-binding protein. Modulates Ca(2+) signaling, and Ca(2+)-dependent cellular processes and enzyme activities. This chain is Regucalcin (RGN), found in Macaca fascicularis (Crab-eating macaque).